A 28-amino-acid chain; its full sequence is Ornatin-D (28 aa).

Belongs to the ornatin family.

The protein resides in the secreted. In terms of biological role, potent inhibitor of fibrinogen interaction with platelet receptors expressed on glycoprotein IIb-IIIa complex. May prevent blood from clotting during either feeding and/or storage of ingested blood. This is Ornatin-D from Placobdella ornata (Turtle leech).